Consider the following 1122-residue polypeptide: Phytochrome A (1122 aa).

Polar residues predominate over residues 1–11 (MSGSRPTQSSE). The tract at residues 1–21 (MSGSRPTQSSEGSRRSRHSAR) is disordered. The GAF domain occupies 218–402 (SMERLCDTMV…VFAIHVNKEV (185 aa)). Cys323 contributes to the phytochromobilin binding site. Residues 618–688 (VTSEMVRLIE…RMLENALEGT (71 aa)) form the PAS 1 domain. Residues 695-747 (FEIKTHLSRADAGPISLVVNACASRDLHENVVGVCFVAHDLTGQKTVMDKFTR) form the PAC domain. Residues 748 to 822 (IEGDYKAIIQ…KNQEAFVNLG (75 aa)) enclose the PAS 2 domain. Residues 902-1119 (YIKRQIRNPL…SFIITAELAA (218 aa)) enclose the Histidine kinase domain.

Belongs to the phytochrome family. As to quaternary structure, homodimer. Interacts with NDPK2 and PKS4. Stabilized by interactions with PAPP5 and FYPP3 which are enhanced in the phosphorylated Pfr form. Interacts with COP1/SPA1 complex. Binds, via its photosensory domain, to PTAC12/HMR when photoactivated; this interaction stimulates its localization to photobodies. Interacts with FHY1, FHL and FHY3, especially upon far-red (FR) light illumination; when underphosphorylated. Forms PHYA/FHY1/HFR1 complex. Binds to PIF3/PAP3. In terms of processing, phosphorylated. Contains one covalently linked phytochromobilin chromophore. Expressed in fruits, flowers, leaves, stems, seedlings and roots.

The protein resides in the cytoplasm. The protein localises to the nucleus. Its subcellular location is the nucleoplasm. It is found in the nucleus speckle. Functionally, regulatory photoreceptor which exists in two forms that are reversibly interconvertible by light: the Pr form that absorbs maximally in the red region of the spectrum and the Pfr form that absorbs maximally in the far-red region. Photoconversion of Pr to Pfr induces an array of morphogenetic responses, whereas reconversion of Pfr to Pr cancels the induction of those responses. Pfr controls the expression of a number of nuclear genes including those encoding the small subunit of ribulose-bisphosphate carboxylase, chlorophyll A/B binding protein, protochlorophyllide reductase, rRNA, etc. It also controls the expression of its own gene(s) in a negative feedback fashion. Involved in the flowering time regulation. Can phosphorylate FHY1 and, possibly, FHL, in red light conditions; this inactivates their co-shuttling to the nucleus. Regulates phototropic responses both in the nucleus (e.g. hypocotyl elongation and cotyledon opening under high-irradiance conditions and seed germination under very-low-fluence conditions) and in the cytoplasm (e.g. negative gravitropism in blue light and red-enhanced phototropism). Promotes seed germination, suppression of hypocotyl elongation, and randomization of hypocotyl growth orientation in far-red light; these responses to far-red light are repressed by UNE10/PIF8. Stabilizes UNE10/PIF8 but sequesters PIF3/PAP3 from its target genes promoters in far-red light. This chain is Phytochrome A, found in Arabidopsis thaliana (Mouse-ear cress).